Consider the following 166-residue polypeptide: Cyclic pyranopterin monophosphate synthase (166 aa).

Substrate-binding positions include 83–85 (LCH) and 121–122 (ME). The active site involves aspartate 136.

The protein belongs to the MoaC family. As to quaternary structure, homohexamer; trimer of dimers.

The catalysed reaction is (8S)-3',8-cyclo-7,8-dihydroguanosine 5'-triphosphate = cyclic pyranopterin phosphate + diphosphate. It participates in cofactor biosynthesis; molybdopterin biosynthesis. Functionally, catalyzes the conversion of (8S)-3',8-cyclo-7,8-dihydroguanosine 5'-triphosphate to cyclic pyranopterin monophosphate (cPMP). This chain is Cyclic pyranopterin monophosphate synthase, found in Syntrophobacter fumaroxidans (strain DSM 10017 / MPOB).